Consider the following 902-residue polypeptide: HRVYVEMRFTVRDCSSLPNVPGSCKETFNLYYYETDSNIDNKISTFWNESPYLKVDTIAADESFSQVDFGGRLMKVNTEVRSFGPLTRSGFYLAFQDYGACMSLLSVRVFFKKCPSVVQNFAVFPETMTGAESTSLVIARGTCIPNAEEVDVPIKLYCNGDGEWMVPIGKCTCKAGYEPENHVVCKACPAAMFKANQGMGICAQCPANSRSTSEASPICICRNGYYRADFDTPEAPCTSVPSGPRNVISIVNETAITLEWHPPRETGGRDDVNYNIICKKCQSDRRGCSHCDDNVDFVPRQLGLTDTRVFISNLWVHTPYTFEIQAVNGVTNKSPFPPQHVSVNITTNQAAPSSVPIMHQVKATMKSITLSWPQPEQPNGIILDYEIRYYEKDHHEFNSSLARSQTNTASIEGLRPGVVYVVQVRARTVAGYGKFSSKMCFQTLTEEDYKSELREQLPLIAGSAAAGVVFIVSLVAISIVCSRKRTYSKEAVYSDKLQHYSTGRGSPGMKIYIDPFTYEDPNEAVREFAKEIDVSFVKIEEVIGAGEFGEVYKGRLKLPSKREISVAIKTLKAGYSEKQRRDFLSEASIMGQFDHPNIIRLEGVVTKSRPVMIITEFMENGALDSFLRQNDGQFTVIQLVGMLRGIAAGMKYLSEMNYVHRDLAARNILVNSNLVCKVSDFGLSRYLQDDTSDPTYTSSLGGKIPVRWTAPEAIRYRKFTSASDVWSYGIVMWEVMSYGERPYWDMSNQDVINAIEQDYRLPPPMDCPAALHQLMLDCWQKDRNSRPRFGEIVNTLDKMIRNPASLKTVATIPAVPSQPLLDRSIPDISAFTSVDDWLSAIKMGQYRDNFLSSGFTSLHVVAQMTSEDLLRIGITLAGHQKKILNSIQSMRVQISQSPTSIA.

The 119-residue stretch at histidine 1 to glutamine 119 folds into the Eph LBD domain. The Extracellular portion of the chain corresponds to histidine 1–leucine 459. 2 consecutive Fibronectin type-III domains span residues valine 240–alanine 350 and alanine 351–aspartate 448. N-linked (GlcNAc...) asparagine glycans are attached at residues asparagine 252, asparagine 344, and asparagine 398. The helical transmembrane segment at isoleucine 460–valine 480 threads the bilayer. At cysteine 481–alanine 902 the chain is on the cytoplasmic side. One can recognise a Protein kinase domain in the interval valine 537–isoleucine 800. Residues isoleucine 543–valine 551 and lysine 569 each bind ATP. Aspartate 662 acts as the Proton acceptor in catalysis. In terms of domain architecture, SAM spans serine 829–glutamine 893. The PDZ-binding motif lies at serine 900–alanine 902.

Belongs to the protein kinase superfamily. Tyr protein kinase family. Ephrin receptor subfamily. In terms of assembly, heterotetramer upon binding of the ligand. The heterotetramer is composed of an ephrin dimer and a receptor dimer. Oligomerization is probably required to induce biological responses. Post-translationally, phosphorylated. Autophosphorylation is stimulated by ligands. In terms of tissue distribution, expressed in the embryo in the brain and spinal cord and in the first and fourth visceral arches. Most abundant in adult brain, with lower levels in eye, heart, ovary, oviduct, lung and pharynx.

Its subcellular location is the cell membrane. The protein resides in the early endosome membrane. It localises to the cell projection. It is found in the dendrite. It catalyses the reaction L-tyrosyl-[protein] + ATP = O-phospho-L-tyrosyl-[protein] + ADP + H(+). Functionally, receptor tyrosine kinase which binds promiscuously transmembrane ephrin-B family ligands residing on adjacent cells, leading to contact-dependent bidirectional signaling into neighboring cells. The signaling pathway downstream of the receptor is referred to as forward signaling while the signaling pathway downstream of the ephrin ligand is referred to as reverse signaling. May play a role in axon guidance during nervous system development. May also play an important redundant role with other ephrin-B receptors in development and maturation of dendritic spines and synapse formation. More generally, may play a role in targeted cell migration and adhesion. Upon activation by ephrin-B ligands activates the MAPK/ERK and the JNK signaling cascades to regulate cell migration and adhesion respectively. This Xenopus laevis (African clawed frog) protein is Ephrin type-B receptor 1-B (ephb1-b).